Consider the following 779-residue polypeptide: Protein WEAK CHLOROPLAST MOVEMENT UNDER BLUE LIGHT-like 1 (779 aa).

The segment at 1–119 (MEDLKTTDAL…NAVSPRPLYS (119 aa)) is disordered. Positions 79-88 (DSPTTPSFVS) are enriched in polar residues. Phosphoserine is present on Ser-139. Coiled-coil stretches lie at residues 182–503 (RMKV…KQRE), 532–587 (KETR…ESRL), and 657–715 (AVSE…KWRE). Over residues 650 to 661 (ANARVAAAVSEV) the composition is skewed to low complexity. Disordered regions lie at residues 650 to 674 (ANARVAAAVSEVGEAKETEKRSLEK) and 694 to 759 (EKAE…NPVK). Basic and acidic residues-rich tracts occupy residues 662 to 674 (GEAKETEKRSLEK) and 694 to 718 (EKAEKAKEGKLGVEQELRKWREVSE). Over residues 741–753 (TSVSNETETNPIP) the composition is skewed to polar residues.

Belongs to the WEB family.

The sequence is that of Protein WEAK CHLOROPLAST MOVEMENT UNDER BLUE LIGHT-like 1 (WEL1) from Arabidopsis thaliana (Mouse-ear cress).